The following is a 367-amino-acid chain: DNA replication and repair protein RecF (367 aa).

ATP is bound at residue 30 to 37 (GENAQGKT).

It belongs to the RecF family.

It is found in the cytoplasm. In terms of biological role, the RecF protein is involved in DNA metabolism; it is required for DNA replication and normal SOS inducibility. RecF binds preferentially to single-stranded, linear DNA. It also seems to bind ATP. The chain is DNA replication and repair protein RecF from Chlamydia caviae (strain ATCC VR-813 / DSM 19441 / 03DC25 / GPIC) (Chlamydophila caviae).